Here is a 121-residue protein sequence, read N- to C-terminus: Two-component response regulator ORR8 (121 aa).

In terms of domain architecture, Response regulatory spans 5-121 (HVLVVDDTHV…VDVPRIMKYI (117 aa)). A 4-aspartylphosphate modification is found at Asp-55.

Belongs to the ARR family. Type-A subfamily. Post-translationally, two-component system major event consists of a His-to-Asp phosphorelay between a sensor histidine kinase (HK) and a response regulator (RR). In plants, the His-to-Asp phosphorelay involves an additional intermediate named Histidine-containing phosphotransfer protein (HPt). This multistep phosphorelay consists of a His-Asp-His-Asp sequential transfer of a phosphate group between first a His and an Asp of the HK protein, followed by the transfer to a conserved His of the HPt protein and finally the transfer to an Asp in the receiver domain of the RR protein. As to expression, expressed in mature leaves, and at low levels in roots, shoots and flowers.

Its function is as follows. Functions as a response regulator involved in His-to-Asp phosphorelay signal transduction system. Phosphorylation of the Asp residue in the receiver domain activates the ability of the protein to promote the transcription of target genes. Type-A response regulators seem to act as negative regulators of the cytokinin signaling. This chain is Two-component response regulator ORR8, found in Oryza sativa subsp. indica (Rice).